Reading from the N-terminus, the 614-residue chain is UvrABC system protein C (614 aa).

One can recognise a GIY-YIG domain in the interval 20-98 (TAPGVYRMYA…IKSLSPRYNV (79 aa)). In terms of domain architecture, UVR spans 207 to 242 (DELTRELGEQMQAASEALEFEQAARLRDLISSLRSM).

This sequence belongs to the UvrC family. As to quaternary structure, interacts with UvrB in an incision complex.

Its subcellular location is the cytoplasm. In terms of biological role, the UvrABC repair system catalyzes the recognition and processing of DNA lesions. UvrC both incises the 5' and 3' sides of the lesion. The N-terminal half is responsible for the 3' incision and the C-terminal half is responsible for the 5' incision. The polypeptide is UvrABC system protein C (Stenotrophomonas maltophilia (strain R551-3)).